A 1099-amino-acid chain; its full sequence is Transmembrane protein 132C (1099 aa).

The first 31 residues, M1–S31, serve as a signal peptide directing secretion. Residues R32–D915 are Extracellular-facing. Residue N95 is glycosylated (N-linked (GlcNAc...) asparagine). A disordered region spans residues G237–R260. Residues N314 and N371 are each glycosylated (N-linked (GlcNAc...) asparagine). Residues D801 to D872 are disordered. A compositionally biased stretch (basic and acidic residues) spans E813–G849. Residues L916 to I936 traverse the membrane as a helical segment. At N937–V1099 the chain is on the cytoplasmic side. Positions N1002–K1045 are disordered. Residues G1008–V1018 show a composition bias toward polar residues.

Belongs to the TMEM132 family.

It is found in the membrane. The protein is Transmembrane protein 132C (Tmem132c) of Mus musculus (Mouse).